The sequence spans 335 residues: Proline-rich protein 1 (335 aa).

Positions 1 to 22 are cleaved as a signal peptide; sequence MAITRASFAICILLSLATIATA. A run of 39 repeats spans residues 30–34, 35–39, 40–43, 44–48, 49–53, 54–57, 58–62, 63–67, 68–71, 72–76, 77–81, 82–86, 87–91, 92–96, 97–101, 102–106, 107–110, 111–115, 116–120, 121–125, 126–130, 131–135, 136–139, 140–144, 145–148, 149–153, 154–158, 159–163, 164–167, 168–172, 173–177, 178–182, 184–189, 190–194, 195–200, 201–207, 208–212, 284–288, and 319–323. The 39 X 5 AA approximate repeats stretch occupies residues 30-323; it reads PPVYTSPVNK…LFNVGPFYFT (294 aa).

This sequence belongs to the plant proline-rich protein superfamily. ENOD12 family. As to expression, exclusively expressed in roots, especially in root hairs.

The protein localises to the secreted. It is found in the cell wall. May contribute to cell wall structure in root hairs. The protein is Proline-rich protein 1 (PRP1) of Arabidopsis thaliana (Mouse-ear cress).